The following is a 255-amino-acid chain: MISILVSRFLLAALVLQYATIDAVNYCNLPCRGDRFHVGCGESAFAQECGESPETLDLLKEHTDEILSKINDVRDHVAKGSWGLPMAARMKVVVWDEELARLATRHTKGCLAETHACRNTERFLFPGQLNFEYTDDKLPQTKELIDAAIKKGHLQKHNISREIIESYKDNGPDGDVEELALALSDRVTAVGCGLTTWQDGAKARALLTCNFSSQNIWERPVYKIGNSPGEKCIEKDETYKNLCSASEPIDSNESN.

A signal peptide spans 1 to 23 (MISILVSRFLLAALVLQYATIDA). The Cell attachment site motif lies at 32-34 (RGD). The SCP domain maps to 67–211 (LSKINDVRDH…KARALLTCNF (145 aa)).

This sequence belongs to the CRISP family. In terms of tissue distribution, expressed in salivary glands.

It localises to the secreted. Functionally, inhibits platelet aggregation induced by all agonists tested (ADP, arachidonic acid, the thromboxane A2 analog U46619, thrombin, and snake venom snaclecs (TMVA that activates platelet through GPIB, and stejnulxin that specifically acts through GPVI (GP6))). May act by competing with fibrinogen for binding to glycoprotein IIb/IIIa (ITGA2B/ITGB3). The sequence is that of Tabinhibitin 2 from Tabanus yao (Horsefly).